We begin with the raw amino-acid sequence, 370 residues long: Succinoglycan biosynthesis protein ExoH (370 aa).

10 helical membrane passes run 14-34 (ILLI…WSPF), 46-66 (VFLG…ISGY), 88-108 (TVLL…YAIQ), 144-164 (LYFL…ALLV), 170-190 (VTLL…IFLK), 193-213 (ILFG…IKML), 216-236 (FAAP…VGLY), 244-264 (LWLD…SWAI), 282-302 (GLSF…WMIW), and 307-327 (LSYY…ILVA). Positions 350–370 (AKRMATQPPQGAQAGYSPQQR) are disordered.

The protein belongs to the acyltransferase 3 family.

The protein localises to the cell membrane. The protein operates within glycan metabolism; exopolysaccharide biosynthesis. Required for the succinyl modification of the seventh sugar (glucose) of the octasaccharide subunit of succinoglycan (EPS I). The chain is Succinoglycan biosynthesis protein ExoH (exoH) from Rhizobium meliloti (strain 1021) (Ensifer meliloti).